The sequence spans 388 residues: Diphosphomevalonate decarboxylase (388 aa).

(R)-5-diphosphomevalonate contacts are provided by residues 19–22 (YWGK), Arg74, 153–158 (SGSACR), and Thr209. Residues 367-388 (QGPQGSSESLINDKGLPKAVAN) form a disordered region.

This sequence belongs to the diphosphomevalonate decarboxylase family. Homodimer.

It carries out the reaction (R)-5-diphosphomevalonate + ATP = isopentenyl diphosphate + ADP + phosphate + CO2. It functions in the pathway isoprenoid biosynthesis; isopentenyl diphosphate biosynthesis via mevalonate pathway; isopentenyl diphosphate from (R)-mevalonate: step 3/3. Its function is as follows. Diphosphomevalonate decarboxylase; part of the second module of ergosterol biosynthesis pathway that includes the middle steps of the pathway. The second module is carried out in the vacuole and involves the formation of farnesyl diphosphate, which is also an important intermediate in the biosynthesis of ubiquinone, dolichol, heme and prenylated proteins. Activity by the mevalonate kinase ERG12 first converts mevalonate into 5-phosphomevalonate. 5-phosphomevalonate is then further converted to 5-diphosphomevalonate by the phosphomevalonate kinase ERG8. The diphosphomevalonate decarboxylase MVD1/ERG19 then produces isopentenyl diphosphate. The isopentenyl-diphosphate delta-isomerase IDI1 then catalyzes the 1,3-allylic rearrangement of the homoallylic substrate isopentenyl (IPP) to its highly electrophilic allylic isomer, dimethylallyl diphosphate (DMAPP). Finally the farnesyl diphosphate synthase ERG20 catalyzes the sequential condensation of isopentenyl pyrophosphate with dimethylallyl pyrophosphate, and then with the resultant geranylpyrophosphate to the ultimate product farnesyl pyrophosphate. The protein is Diphosphomevalonate decarboxylase of Debaryomyces hansenii (strain ATCC 36239 / CBS 767 / BCRC 21394 / JCM 1990 / NBRC 0083 / IGC 2968) (Yeast).